The following is a 344-amino-acid chain: MEKVAVLGAGSWGTALAIVLADNGHEVRLWSHRKEHAETINETHRNHKYLDVDIPNEITAYSDMHQTVSGVDAVVIVVPTKAIREVCSELNKWMDSKTTVIHATKGIEPVSLKRVSEMIEEEMDIKYEDIVVLSGPSHAEEVALRHPTTVTTSSINLEKAKHAQDLFSSDSFRVYTSDDILGIELGGALKNIIALGAGISDGLGFGDNAKAALITRGLAEIARLGTSLGANPLSFLGLSGVGDLIVTCTSVHSRNWRAGNLLGKGNQLEDVLEQMGMVVEGVRTVKAAHQFAKDQNVDMPITSGIFQILFENKNPKDVVEQLMNRGKRDEMDDLAVLLKERYSE.

Ser-11, Trp-12, His-32, Arg-33, and Lys-105 together coordinate NADPH. Lys-105, Gly-135, and Ser-137 together coordinate sn-glycerol 3-phosphate. NADPH is bound at residue Ala-139. Positions 190, 243, 253, 254, and 255 each coordinate sn-glycerol 3-phosphate. The active-site Proton acceptor is the Lys-190. Residue Arg-254 coordinates NADPH. NADPH-binding residues include Val-278 and Glu-280.

It belongs to the NAD-dependent glycerol-3-phosphate dehydrogenase family.

It localises to the cytoplasm. The enzyme catalyses sn-glycerol 3-phosphate + NAD(+) = dihydroxyacetone phosphate + NADH + H(+). The catalysed reaction is sn-glycerol 3-phosphate + NADP(+) = dihydroxyacetone phosphate + NADPH + H(+). The protein operates within membrane lipid metabolism; glycerophospholipid metabolism. Its function is as follows. Catalyzes the reduction of the glycolytic intermediate dihydroxyacetone phosphate (DHAP) to sn-glycerol 3-phosphate (G3P), the key precursor for phospholipid synthesis. This chain is Glycerol-3-phosphate dehydrogenase [NAD(P)+], found in Oceanobacillus iheyensis (strain DSM 14371 / CIP 107618 / JCM 11309 / KCTC 3954 / HTE831).